Reading from the N-terminus, the 229-residue chain is Probable transmembrane reductase CYB561D1 (229 aa).

The Cytoplasmic portion of the chain corresponds to 1-24; that stretch reads MHSMEVGLVPAPAREPRLTRWLRR. In terms of domain architecture, Cytochrome b561 spans 22 to 224; that stretch reads LRRGSGILAH…HQISSSYLPR (203 aa). A helical transmembrane segment spans residues 25–45; that stretch reads GSGILAHLIALGFTIFLTVLS. Topologically, residues 46–53 are lumenal; that stretch reads RPGTSLFS. The chain crosses the membrane as a helical span at residues 54–74; the sequence is WHPVFMALAFCLCMAEAILLF. Histidine 55 is a heme b binding site. The Cytoplasmic segment spans residues 75–91; that stretch reads SPEHSLFFFCSRKTRIR. Residues 92–112 form a helical membrane-spanning segment; it reads LHWAGQTMAILCAVLGLGFII. Heme b contacts are provided by histidine 93 and histidine 127. The Lumenal segment spans residues 113–128; that stretch reads SSKIRSEMSHLVSWHS. The chain crosses the membrane as a helical span at residues 129-149; sequence WIGALTLLATGGQALCGLCLL. Residues 150 to 169 lie on the Cytoplasmic side of the membrane; that stretch reads CPRAARVSRVARLKLYHLTC. Histidine 166 lines the heme b pocket. Residues 170–190 form a helical membrane-spanning segment; it reads GLVVYLMATVTVLLGMYSVWF. Residues 191 to 193 lie on the Lumenal side of the membrane; it reads QAQ. A helical transmembrane segment spans residues 194–214; sequence IKGTAWYLCLGLPLYPALVIM. At 215–229 the chain is on the cytoplasmic side; that stretch reads HQISSSYLPRKKVEI.

The cofactor is heme b.

It is found in the membrane. The catalysed reaction is monodehydro-L-ascorbate radical(out) + L-ascorbate(in) = monodehydro-L-ascorbate radical(in) + L-ascorbate(out). It catalyses the reaction Fe(3+)(out) + L-ascorbate(in) = monodehydro-L-ascorbate radical(in) + Fe(2+)(out) + H(+). Functionally, probable transmembrane reductase that may use ascorbate as an electron donor and transfer electrons across membranes to reduce monodehydro-L-ascorbate radical and iron cations Fe(3+) in another cellular compartment. This is Probable transmembrane reductase CYB561D1 from Mus musculus (Mouse).